The following is a 59-amino-acid chain: MSAGLKITLIKSQIGAPTAQKAVLNGMGLNKLNKTVVLKNTPEIVGMIAKVSHMVKVEE.

This sequence belongs to the universal ribosomal protein uL30 family. Part of the 50S ribosomal subunit.

The polypeptide is Large ribosomal subunit protein uL30 (Geobacter metallireducens (strain ATCC 53774 / DSM 7210 / GS-15)).